A 155-amino-acid chain; its full sequence is Transcriptional repressor NrdR (155 aa).

Residues 1–11 (MECPNCHQNAS) are compositionally biased toward polar residues. Residues 1-22 (MECPNCHQNASRVIDSRPSDEN) are disordered. A zinc finger lies at 3-34 (CPNCHQNASRVIDSRPSDENRAIRRRRECENC). One can recognise an ATP-cone domain in the interval 49–139 (LLVIKNDGTR…IYREFKDMSS (91 aa)).

This sequence belongs to the NrdR family. Zn(2+) is required as a cofactor.

In terms of biological role, negatively regulates transcription of bacterial ribonucleotide reductase nrd genes and operons by binding to NrdR-boxes. The protein is Transcriptional repressor NrdR of Lactobacillus helveticus (strain DPC 4571).